The primary structure comprises 25 residues: Dermaseptin-DI5 (25 aa).

Belongs to the frog skin active peptide (FSAP) family. Dermaseptin subfamily. In terms of tissue distribution, expressed by the skin glands.

It localises to the secreted. Antibacterial peptide with activity against Gram-positive bacteria S.aureus and E.faecalis, and Gram-negative bacteria P.aeruginosa and E.coli. The sequence is that of Dermaseptin-DI5 from Phyllomedusa distincta (Monkey frog).